The sequence spans 707 residues: Anti-sigma-I factor RsgI9 (707 aa).

Residues methionine 1–asparagine 149 are Cytoplasmic-facing. Positions isoleucine 3–glutamate 50 constitute a RsgI N-terminal anti-sigma domain. Residues phenylalanine 150–leucine 172 form a helical membrane-spanning segment. The Extracellular portion of the chain corresponds to asparagine 173–glutamine 707. Residues asparagine 256–alanine 283 are a coiled coil. A disordered region spans residues glutamate 345–glycine 392. Pro residues predominate over residues threonine 353–threonine 367. A compositionally biased stretch (low complexity) spans proline 368–proline 379.

The protein resides in the cell membrane. The sequence is that of Anti-sigma-I factor RsgI9 from Acetivibrio thermocellus (strain ATCC 27405 / DSM 1237 / JCM 9322 / NBRC 103400 / NCIMB 10682 / NRRL B-4536 / VPI 7372) (Clostridium thermocellum).